The primary structure comprises 282 residues: Putative hydrolase Bcenmc03_4750 (282 aa).

Mg(2+) is bound by residues Glu124, Glu126, and Asp155.

This sequence belongs to the FAH family. The cofactor is Mg(2+).

In Burkholderia orbicola (strain MC0-3), this protein is Putative hydrolase Bcenmc03_4750.